Consider the following 381-residue polypeptide: cAMP-dependent protein kinase type I-beta regulatory subunit (381 aa).

Positions 1–136 are dimerization and phosphorylation; sequence MASPSCFHSE…ALAKAISKNV (136 aa). S3 is modified (phosphoserine). The residue at position 21 (Y21) is a 3'-nitrotyrosine. Residues 66 to 88 are disordered; that stretch reads LARQKSNSQCDSHDEEISPTPPN. Phosphoserine occurs at positions 77 and 83. A Phosphothreonine modification is found at T85. The Pseudophosphorylation motif signature appears at 96 to 100; it reads RRGGV. Omega-N-methylarginine is present on R97. 3',5'-cyclic AMP-binding positions include 137-254, E202, R211, 255-381, E326, and R335; these read LFSH…SKVS and ILES…SLTV.

The protein belongs to the cAMP-dependent kinase regulatory chain family. In terms of assembly, the inactive holoenzyme is composed of two regulatory chains and two catalytic chains. Activation by cAMP releases the two active catalytic monomers and the regulatory dimer. Interacts with PRKX; regulates this cAMP-dependent protein kinase. Interacts with smAKAP; this interaction may target PRKAR1B to the plasma membrane. In terms of processing, the pseudophosphorylation site binds to the substrate-binding region of the catalytic chain, resulting in the inhibition of its activity. In terms of tissue distribution, four types of regulatory chains are found: I-alpha, I-beta, II-alpha, and II-beta. Their expression varies among tissues and is in some cases constitutive and in others inducible.

The protein localises to the cell membrane. Regulatory subunit of the cAMP-dependent protein kinases involved in cAMP signaling in cells. The polypeptide is cAMP-dependent protein kinase type I-beta regulatory subunit (Prkar1b) (Mus musculus (Mouse)).